We begin with the raw amino-acid sequence, 219 residues long: ATP-dependent dethiobiotin synthetase BioD (219 aa).

Aspartate 14–tyrosine 19 provides a ligand contact to ATP. Threonine 18 contributes to the Mg(2+) binding site. Residue lysine 37 is part of the active site. Serine 41 serves as a coordination point for substrate. Residues aspartate 54, glutamate 114–glycine 117, and asparagine 175–asparagine 176 contribute to the ATP site. Residues aspartate 54 and glutamate 114 each contribute to the Mg(2+) site.

Belongs to the dethiobiotin synthetase family. As to quaternary structure, homodimer. Requires Mg(2+) as cofactor.

Its subcellular location is the cytoplasm. The enzyme catalyses (7R,8S)-7,8-diammoniononanoate + CO2 + ATP = (4R,5S)-dethiobiotin + ADP + phosphate + 3 H(+). It functions in the pathway cofactor biosynthesis; biotin biosynthesis; biotin from 7,8-diaminononanoate: step 1/2. Functionally, catalyzes a mechanistically unusual reaction, the ATP-dependent insertion of CO2 between the N7 and N8 nitrogen atoms of 7,8-diaminopelargonic acid (DAPA, also called 7,8-diammoniononanoate) to form a ureido ring. This Fusobacterium nucleatum subsp. nucleatum (strain ATCC 25586 / DSM 15643 / BCRC 10681 / CIP 101130 / JCM 8532 / KCTC 2640 / LMG 13131 / VPI 4355) protein is ATP-dependent dethiobiotin synthetase BioD.